The sequence spans 338 residues: MSITVNQTVLHQLVKNVDGDSIKMESVLRDELLSITPEVEQMMLQLHQSYQNKAKAFGVFQEKSIFAQHLNRLLEQEIEFLGFSQYSTKLLADELGKYNFAESGTLILCQYNFLATDYLFIALLDSRHSMLVDEHLDIRRTEYLDITQFDIAARINLTDLQVNANSNRYLTFIKGRVGRKISDFFMDFLGAEEGLNPQVQNQCLLQAVSDYCDQGELNKEQTQAVKKQVFEYCKGQLSNGNNIELRELSDSLPTLNEQPFVVFTEKQNYGLEESIPPIRSTLKSLTKFSGSGKGVTLSFDAELLNTRIQWDPMTDTLTIKGLPPNLKDQLQKALKSEN.

This sequence belongs to the YejK family.

It localises to the cytoplasm. The protein localises to the nucleoid. This Haemophilus influenzae (strain ATCC 51907 / DSM 11121 / KW20 / Rd) protein is Nucleoid-associated protein HI_0839.